The chain runs to 296 residues: Glycine--tRNA ligase alpha subunit (296 aa).

It belongs to the class-II aminoacyl-tRNA synthetase family. In terms of assembly, tetramer of two alpha and two beta subunits.

The protein resides in the cytoplasm. The catalysed reaction is tRNA(Gly) + glycine + ATP = glycyl-tRNA(Gly) + AMP + diphosphate. The protein is Glycine--tRNA ligase alpha subunit of Polynucleobacter necessarius subsp. necessarius (strain STIR1).